A 325-amino-acid polypeptide reads, in one-letter code: ATP phosphoribosyltransferase (325 aa).

The protein belongs to the ATP phosphoribosyltransferase family. Long subfamily. The cofactor is Mg(2+).

The protein localises to the cytoplasm. The catalysed reaction is 1-(5-phospho-beta-D-ribosyl)-ATP + diphosphate = 5-phospho-alpha-D-ribose 1-diphosphate + ATP. Its pathway is amino-acid biosynthesis; L-histidine biosynthesis; L-histidine from 5-phospho-alpha-D-ribose 1-diphosphate: step 1/9. With respect to regulation, feedback inhibited by histidine. Its function is as follows. Catalyzes the condensation of ATP and 5-phosphoribose 1-diphosphate to form N'-(5'-phosphoribosyl)-ATP (PR-ATP). Has a crucial role in the pathway because the rate of histidine biosynthesis seems to be controlled primarily by regulation of HisG enzymatic activity. This is ATP phosphoribosyltransferase from Afipia carboxidovorans (strain ATCC 49405 / DSM 1227 / KCTC 32145 / OM5) (Oligotropha carboxidovorans).